The following is a 944-amino-acid chain: Thyroid peroxidase (944 aa).

The N-terminal stretch at 1–30 is a signal peptide; sequence MVGLVPAGSAWGGRALAVLGVTLLVALARG. Residues 31 to 858 are Extracellular-facing; sequence LLPFFLGGRD…SGRLPKASLV (828 aa). N-linked (GlcNAc...) asparagine glycosylation occurs at N141. A disulfide bridge links C154 with C170. Residue D250 coordinates heme b. Residue H251 is the Proton acceptor of the active site. D252 contacts Ca(2+). Cystine bridges form between C271-C281 and C275-C295. An N-linked (GlcNAc...) asparagine glycan is attached at N316. Residues T330, F332, D334, and S336 each contribute to the Ca(2+) site. An N-linked (GlcNAc...) asparagine glycan is attached at N351. Heme b contacts are provided by E408 and H503. Disulfide bonds link C606–C663, C704–C729, C750–C790, C776–C802, C808–C822, C816–C831, and C833–C846. A glycan (N-linked (GlcNAc...) asparagine) is linked at N623. A Sushi domain is found at 748-804; it reads DACGLPDSLDNGDVVLCGEAGRRVLVFSCRHGFKLQGPEQVACSPRGGAVRAPVCRD. The 44-residue stretch at 804–847 folds into the EGF-like; calcium-binding domain; it reads DINECEDASHPPCHGSARCRNTKGGFRCECTDPAVLGEDGTTCV. The chain crosses the membrane as a helical span at residues 859–879; it reads SIALGIVLVVGLAGLTWTLVC. The Cytoplasmic portion of the chain corresponds to 880–944; that stretch reads RWAHAGRKAS…RSHVAQGSPA (65 aa). The disordered stretch occupies residues 895-944; the sequence is LGGRGAPPPGRGAGQDGASGSLVPPLGPQGRTRAVDPTSSRSHVAQGSPA. A compositionally biased stretch (polar residues) spans 931 to 944; sequence PTSSRSHVAQGSPA.

It belongs to the peroxidase family. XPO subfamily. Interacts with DUOX1, DUOX2 and CYBA. Ca(2+) serves as cofactor. The cofactor is heme b. Post-translationally, heme is covalently bound through a H(2)O(2)-dependent autocatalytic process. Heme insertion is important for the delivery of protein at the cell surface. Cleaved in its N-terminal part.

The protein localises to the membrane. It catalyses the reaction 2 iodide + H2O2 + 2 H(+) = diiodine + 2 H2O. It carries out the reaction [thyroglobulin]-L-tyrosine + iodide + H2O2 + H(+) = [thyroglobulin]-3-iodo-L-tyrosine + 2 H2O. The enzyme catalyses [thyroglobulin]-3-iodo-L-tyrosine + iodide + H2O2 + H(+) = [thyroglobulin]-3,5-diiodo-L-tyrosine + 2 H2O. The catalysed reaction is 2 [thyroglobulin]-3,5-diiodo-L-tyrosine + H2O2 = [thyroglobulin]-L-thyroxine + [thyroglobulin]-dehydroalanine + 2 H2O. It catalyses the reaction [thyroglobulin]-3-iodo-L-tyrosine + [thyroglobulin]-3,5-diiodo-L-tyrosine + H2O2 = [thyroglobulin]-3,3',5-triiodo-L-thyronine + [thyroglobulin]-dehydroalanine + 2 H2O. It participates in hormone biosynthesis; thyroid hormone biosynthesis. In terms of biological role, iodination and coupling of the hormonogenic tyrosines in thyroglobulin to yield the thyroid hormones T(3) and T(4). The polypeptide is Thyroid peroxidase (TPO) (Canis lupus familiaris (Dog)).